We begin with the raw amino-acid sequence, 317 residues long: GPI-specific phospholipase A2-like PGAP3 (317 aa).

An N-terminal signal peptide occupies residues 1-18 (MAPFLVLFLAGVVSASRG). The Lumenal portion of the chain corresponds to 19–93 (DREPVYRDCV…QFHGKWPFSR (75 aa)). The N-linked (GlcNAc...) asparagine glycan is linked to asparagine 35. The helical transmembrane segment at 94-114 (FLFFQEPASALASFLNGVASL) threads the bilayer. The Cytoplasmic portion of the chain corresponds to 115–132 (LMLFRYRSSVPSSCQMYR). Residues 133–153 (TCLAFSMVSVNAWFWSTIFHT) traverse the membrane as a helical segment. Residues 154 to 163 (RDTALTEKMD) lie on the Lumenal side of the membrane. Residues 164–180 (YFCASSVILHSIYLCCM) traverse the membrane as a helical segment. Over 181-189 (RTFGLQYPS) the chain is Cytoplasmic. A helical transmembrane segment spans residues 190 to 210 (IANAFGAFLVLLFACHISYLT). The Lumenal portion of the chain corresponds to 211–219 (LGRFDYSYN). Residues 220–240 (MAANTSFGIVNLMWWLAWCMW) traverse the membrane as a helical segment. The Cytoplasmic portion of the chain corresponds to 241-251 (RRFHQPYLWKC). The helical transmembrane segment at 252 to 272 (VLVVVLLQSLALLELLDFPPV) threads the bilayer. Position 273 (methionine 273) is a topological domain, lumenal. The helical transmembrane segment at 274–293 (WILDAHALWHFSTIPLHFLF) threads the bilayer. At 294–317 (YSFLRDDSLYLLKVNHDDDIPKLD) the chain is on the cytoplasmic side.

Belongs to the PGAP3 family.

It localises to the golgi apparatus membrane. Its function is as follows. Involved in the fatty acid remodeling steps of GPI-anchor maturation where the unsaturated acyl chain at sn-2 of inositol phosphate is replaced by a saturated stearoyl chain. May catalyze the first step of the fatty acid remodeling, by removing the unsaturated acyl chain at sn-2 of inositol phosphate, generating a lyso-GPI intermediate. The fatty acid remodeling steps is critical for the integration of GPI-APs into lipid rafts. The protein is GPI-specific phospholipase A2-like PGAP3 of Xenopus laevis (African clawed frog).